A 93-amino-acid chain; its full sequence is Small ribosomal subunit protein uS19 (93 aa).

The disordered stretch occupies residues 74–93 (FSPTRTFRGHVKDDRKSKRR). The span at 83-93 (HVKDDRKSKRR) shows a compositional bias: basic and acidic residues.

The protein belongs to the universal ribosomal protein uS19 family.

Functionally, protein S19 forms a complex with S13 that binds strongly to the 16S ribosomal RNA. The chain is Small ribosomal subunit protein uS19 from Streptomyces griseus subsp. griseus (strain JCM 4626 / CBS 651.72 / NBRC 13350 / KCC S-0626 / ISP 5235).